The following is a 238-amino-acid chain: Ribonuclease PH (238 aa).

Residues Arg86 and 124 to 126 (GTR) contribute to the phosphate site.

It belongs to the RNase PH family. Homohexameric ring arranged as a trimer of dimers.

It catalyses the reaction tRNA(n+1) + phosphate = tRNA(n) + a ribonucleoside 5'-diphosphate. Its function is as follows. Phosphorolytic 3'-5' exoribonuclease that plays an important role in tRNA 3'-end maturation. Removes nucleotide residues following the 3'-CCA terminus of tRNAs; can also add nucleotides to the ends of RNA molecules by using nucleoside diphosphates as substrates, but this may not be physiologically important. Probably plays a role in initiation of 16S rRNA degradation (leading to ribosome degradation) during starvation. In Vibrio atlanticus (strain LGP32) (Vibrio splendidus (strain Mel32)), this protein is Ribonuclease PH.